The primary structure comprises 424 residues: MFS-type transporter opdF (424 aa).

Basic and acidic residues predominate over residues Met1–Asn10. Residues Met1–Pro23 are disordered. 5 consecutive transmembrane segments (helical) span residues Val36–Phe56, Val102–Thr122, Leu127–Met147, Ile160–Val180, and Val187–Ala207. The N-linked (GlcNAc...) asparagine glycan is linked to Asn208. The next 6 membrane-spanning stretches (helical) occupy residues Leu239–Val259, Gly265–Gly285, Phe299–Pro319, Phe329–Val349, Val364–Ala384, and Thr391–Leu411.

Belongs to the major facilitator superfamily. Monocarboxylate porter (TC 2.A.1.13) family.

Its subcellular location is the membrane. Its function is as follows. MFS-type transporter; part of the gene cluster that mediates the biosynthesis of oxopyrrolidines, polyketide-amino acid hybrid compounds with feature structures of tetramic acid. This Penicillium oxalicum (strain 114-2 / CGMCC 5302) (Penicillium decumbens) protein is MFS-type transporter opdF.